The sequence spans 473 residues: MSPQTETKASVGFKAGLKEYKLTYYTPQYETKDTDILAAFRVTPQPGVPPEEAGAAVAAESSTGTWTTVWTDGLTSLDRYKGRCYHIEPVPGEKDQYICYAAYPLDLFEEGSVTNMFTSIVGNVFGFKALRALRLEDLRIPVAYVKTFQGPPHGIQVERDKLNKYGRPLLGCTIKPKLGLSAKNYGRAVYECLRGGLDFTKDDENVNSQPFMRWRDRFLFCAEAIYKSQAETGEIKGHYLNATAGTCEEMIKRAIFARELGVPMLMHDYLTGGFTANTSLAHYCRDNGLLLHIHRAMHAVIDRQKNHGMHFRVLAKALRLSGGDHIHSGTVVGKLEGERDITLGFVDLLRDDFIEKDRSRGIYFTQDWVSLPGVIPVASGGIHVWHMPALTEIFGDDSVLQFGGGTLGHPWGNAPGAVANRVAVEACVKARNEGRDLAAEGNAIIREACKWSPELAAACEVWKEIKFEFPAMD.

The propeptide occupies 1–2; sequence MS. Pro3 carries the N-acetylproline modification. At Lys14 the chain carries N6,N6,N6-trimethyllysine. The substrate site is built by Asn123 and Thr173. The active-site Proton acceptor is Lys175. Lys177 lines the substrate pocket. The Mg(2+) site is built by Lys201, Asp203, and Glu204. At Lys201 the chain carries N6-carboxylysine. Catalysis depends on His294, which acts as the Proton acceptor. Substrate-binding residues include Arg295, His327, and Ser379.

It belongs to the RuBisCO large chain family. Type I subfamily. In terms of assembly, heterohexadecamer of 8 large chains and 8 small chains; disulfide-linked. The disulfide link is formed within the large subunit homodimers. The cofactor is Mg(2+). Post-translationally, the disulfide bond which can form in the large chain dimeric partners within the hexadecamer appears to be associated with oxidative stress and protein turnover.

It is found in the plastid. The protein resides in the chloroplast. The enzyme catalyses 2 (2R)-3-phosphoglycerate + 2 H(+) = D-ribulose 1,5-bisphosphate + CO2 + H2O. It carries out the reaction D-ribulose 1,5-bisphosphate + O2 = 2-phosphoglycolate + (2R)-3-phosphoglycerate + 2 H(+). RuBisCO catalyzes two reactions: the carboxylation of D-ribulose 1,5-bisphosphate, the primary event in carbon dioxide fixation, as well as the oxidative fragmentation of the pentose substrate in the photorespiration process. Both reactions occur simultaneously and in competition at the same active site. In Monarda didyma (Scarlet bee-balm), this protein is Ribulose bisphosphate carboxylase large chain.